We begin with the raw amino-acid sequence, 505 residues long: Maturase K (505 aa).

Belongs to the intron maturase 2 family. MatK subfamily.

The protein resides in the plastid. It localises to the chloroplast. Its function is as follows. Usually encoded in the trnK tRNA gene intron. Probably assists in splicing its own and other chloroplast group II introns. This chain is Maturase K, found in Micranthes integrifolia (Wholeleaf saxifrage).